A 128-amino-acid polypeptide reads, in one-letter code: Fluoride-specific ion channel FluC (128 aa).

4 helical membrane passes run 7–27 (AVLL…LIAV), 34–54 (TGFP…IGMI), 70–90 (LLLA…MYEI), and 104–124 (LYLI…MALA). Residues glycine 78 and threonine 81 each coordinate Na(+).

The protein belongs to the fluoride channel Fluc/FEX (TC 1.A.43) family.

It is found in the cell inner membrane. It carries out the reaction fluoride(in) = fluoride(out). With respect to regulation, na(+) is not transported, but it plays an essential structural role and its presence is essential for fluoride channel function. Functionally, fluoride-specific ion channel. Important for reducing fluoride concentration in the cell, thus reducing its toxicity. This Prosthecochloris aestuarii (strain DSM 271 / SK 413) protein is Fluoride-specific ion channel FluC.